A 165-amino-acid polypeptide reads, in one-letter code: Cytochrome c-type biogenesis protein CcmE (165 aa).

The Cytoplasmic segment spans residues Met-1–Arg-29. A helical; Signal-anchor for type II membrane protein membrane pass occupies residues Leu-30–Ala-50. Topologically, residues Phe-51–Lys-165 are periplasmic. Residues His-143 and Tyr-147 each coordinate heme.

This sequence belongs to the CcmE/CycJ family.

It is found in the cell inner membrane. Functionally, heme chaperone required for the biogenesis of c-type cytochromes. Transiently binds heme delivered by CcmC and transfers the heme to apo-cytochromes in a process facilitated by CcmF and CcmH. The protein is Cytochrome c-type biogenesis protein CcmE of Brucella canis (strain ATCC 23365 / NCTC 10854 / RM-666).